The chain runs to 152 residues: D-aminoacyl-tRNA deacylase (152 aa).

A Gly-cisPro motif, important for rejection of L-amino acids motif is present at residues 137 to 138; the sequence is GP.

It belongs to the DTD family. In terms of assembly, homodimer.

The protein localises to the cytoplasm. The enzyme catalyses glycyl-tRNA(Ala) + H2O = tRNA(Ala) + glycine + H(+). It catalyses the reaction a D-aminoacyl-tRNA + H2O = a tRNA + a D-alpha-amino acid + H(+). An aminoacyl-tRNA editing enzyme that deacylates mischarged D-aminoacyl-tRNAs. Also deacylates mischarged glycyl-tRNA(Ala), protecting cells against glycine mischarging by AlaRS. Acts via tRNA-based rather than protein-based catalysis; rejects L-amino acids rather than detecting D-amino acids in the active site. By recycling D-aminoacyl-tRNA to D-amino acids and free tRNA molecules, this enzyme counteracts the toxicity associated with the formation of D-aminoacyl-tRNA entities in vivo and helps enforce protein L-homochirality. The protein is D-aminoacyl-tRNA deacylase of Methylibium petroleiphilum (strain ATCC BAA-1232 / LMG 22953 / PM1).